The following is a 238-amino-acid chain: Large ribosomal subunit protein bL25 (238 aa).

Residues 1–10 are compositionally biased toward basic and acidic residues; that stretch reads MATTVKELKA. A disordered region spans residues 1 to 24; that stretch reads MATTVKELKATARPKSGKGAARAE.

It belongs to the bacterial ribosomal protein bL25 family. CTC subfamily. Part of the 50S ribosomal subunit; part of the 5S rRNA/L5/L18/L25 subcomplex. Contacts the 5S rRNA. Binds to the 5S rRNA independently of L5 and L18.

Functionally, this is one of the proteins that binds to the 5S RNA in the ribosome where it forms part of the central protuberance. The polypeptide is Large ribosomal subunit protein bL25 (Bradyrhizobium diazoefficiens (strain JCM 10833 / BCRC 13528 / IAM 13628 / NBRC 14792 / USDA 110)).